Here is a 201-residue protein sequence, read N- to C-terminus: 3-isopropylmalate dehydratase small subunit (201 aa).

This sequence belongs to the LeuD family. LeuD type 1 subfamily. In terms of assembly, heterodimer of LeuC and LeuD.

It catalyses the reaction (2R,3S)-3-isopropylmalate = (2S)-2-isopropylmalate. It functions in the pathway amino-acid biosynthesis; L-leucine biosynthesis; L-leucine from 3-methyl-2-oxobutanoate: step 2/4. Catalyzes the isomerization between 2-isopropylmalate and 3-isopropylmalate, via the formation of 2-isopropylmaleate. This is 3-isopropylmalate dehydratase small subunit from Dinoroseobacter shibae (strain DSM 16493 / NCIMB 14021 / DFL 12).